The following is a 625-amino-acid chain: DNA mismatch repair protein MutL (625 aa).

Residues 404–427 (PPPRNAPQSTGMPSMAGTGLPATS) are disordered.

Belongs to the DNA mismatch repair MutL/HexB family.

Its function is as follows. This protein is involved in the repair of mismatches in DNA. It is required for dam-dependent methyl-directed DNA mismatch repair. May act as a 'molecular matchmaker', a protein that promotes the formation of a stable complex between two or more DNA-binding proteins in an ATP-dependent manner without itself being part of a final effector complex. The protein is DNA mismatch repair protein MutL of Xanthomonas oryzae pv. oryzae (strain MAFF 311018).